Consider the following 846-residue polypeptide: MVAPGRMVTSSRRIGRVTNKTKLIIYRGSDKVDTSAAETVLWDQEAGGAGKDSNKHQHIGATGVESGELLEHHLQAALSSASLLHSSNKPSSPKSVKEAPAAALNYHIPTPDATGLVSDTVFSQLYQRTKYVEPYNFIRFSDTVEESSCGWGGLGYCMDDADERWLNDFNSKAEGSSGDVKSDKEQGRGMRVKGKDREKEKGDAPAPLVISEDMFEYIMGVFEKYTEENAPMLHTDLSLLPPFSAVENMFSTPISPAFLPSNEIPKELGDLKACARMARNVYPHWKSRREQRQGKSILPQLNYDETNDNDPYVCFRRRDIRATRKTRRTDNFSIEQFQKLQFELRSAHALADRVLTREREKKSLYEAEKELWEARWKFFETKRRWPSLGMTSDEEHKITGRPTIVPPIQIPSLSGQTPLTSGQSSSHMRKRTDKDREERAQRERYDAQRNAERSGILSGRSNAPDALKERLQALQQKTEEMLARKKEQDAHWDDSIDSPYQPLPPSNSVHAFRSLFVLDPCRAQCKDSETGNEILHPESFRIRRGRGGIVRLDRRTSIYSHRRGIQPTSPSEYPTWLFPDIAPRRSEKKRPRSIDEVEEEMQEQSPKAMRKDLNETWRYDVDRGGAVGVGMGLEEDYDRVIIDDLEAKYIRHRISLLQESDCAKLRPDNYILDQTREALDAAADAKPPPAPIFQKPPAPQPNPQLLAAHLQQQQMLAQQQQMEQFQRFQLMAQQQAMAQAQAQAQAQAQAQAQAQAQAQVQAQGQGHPQAHLQTHPQGVSQPNGVNSPMPNGQQMLPPSDGVKQLKLPPHAVARLGAAMANANANANGGLHVLQQQQQQHAQTSQQ.

5 disordered regions span residues 169-204 (FNSKAEGSSGDVKSDKEQGRGMRVKGKDREKEKGDA), 391-466 (TSDE…APDA), 587-609 (EKKRPRSIDEVEEEMQEQSPKAM), 682-702 (AADAKPPPAPIFQKPPAPQPN), and 759-804 (QVQA…GVKQ). The span at 180 to 203 (VKSDKEQGRGMRVKGKDREKEKGD) shows a compositional bias: basic and acidic residues. The segment covering 411–426 (PSLSGQTPLTSGQSSS) has biased composition (polar residues). The span at 432 to 452 (TDKDREERAQRERYDAQRNAE) shows a compositional bias: basic and acidic residues. Residues 434 to 490 (KDREERAQRERYDAQRNAERSGILSGRSNAPDALKERLQALQQKTEEMLARKKEQDA) adopt a coiled-coil conformation. Residues 686–702 (KPPPAPIFQKPPAPQPN) are compositionally biased toward pro residues. Residues 759 to 773 (QVQAQGQGHPQAHLQ) show a composition bias toward low complexity. A compositionally biased stretch (polar residues) spans 774 to 796 (THPQGVSQPNGVNSPMPNGQQML).

The protein belongs to the enhancer of polycomb family. As to quaternary structure, component of the NuA4 histone acetyltransferase complex.

The protein localises to the nucleus. Functionally, component of the NuA4 histone acetyltransferase complex which is involved in transcriptional activation of selected genes principally by acetylation of nucleosomal histone H4 and H2A. The NuA4 complex is also involved in DNA repair. Involved in gene silencing by neighboring heterochromatin, blockage of the silencing spreading along the chromosome, and required for cell cycle progression through G2/M. This chain is Enhancer of polycomb-like protein 1 (EPL1), found in Cryptococcus neoformans var. neoformans serotype D (strain B-3501A) (Filobasidiella neoformans).